A 197-amino-acid chain; its full sequence is Ribosomal RNA large subunit methyltransferase E (197 aa).

S-adenosyl-L-methionine contacts are provided by glycine 52, tryptophan 54, aspartate 72, aspartate 88, and aspartate 112. The Proton acceptor role is filled by lysine 152.

This sequence belongs to the class I-like SAM-binding methyltransferase superfamily. RNA methyltransferase RlmE family.

It localises to the cytoplasm. It carries out the reaction uridine(2552) in 23S rRNA + S-adenosyl-L-methionine = 2'-O-methyluridine(2552) in 23S rRNA + S-adenosyl-L-homocysteine + H(+). Its function is as follows. Specifically methylates the uridine in position 2552 of 23S rRNA at the 2'-O position of the ribose in the fully assembled 50S ribosomal subunit. In Nitrosopumilus maritimus (strain SCM1), this protein is Ribosomal RNA large subunit methyltransferase E.